The primary structure comprises 51 residues: Large ribosomal subunit protein eL39 (51 aa).

A disordered region spans residues 1-22 (MPSQKSFRTKQKLAKAQKQNRP).

The protein belongs to the eukaryotic ribosomal protein eL39 family. As to quaternary structure, interacts with YIH1.

The chain is Large ribosomal subunit protein eL39 (RPL39) from Debaryomyces hansenii (strain ATCC 36239 / CBS 767 / BCRC 21394 / JCM 1990 / NBRC 0083 / IGC 2968) (Yeast).